The following is a 139-amino-acid chain: uncharacterized protein (139 aa).

A signal peptide spans 1–32; the sequence is MEFHDDKKNELQKKEEIITEAIDTLFQSSAFG. Positions 44 to 139 constitute a sHSP domain; the sequence is SSLKDVQTTI…TLFFPKNKHE (96 aa).

Belongs to the small heat shock protein (HSP20) family.

This is an uncharacterized protein from Bacillus subtilis (strain 168).